The chain runs to 281 residues: Microtubule-associated protein RP/EB family member 3 (281 aa).

In terms of domain architecture, Calponin-homology (CH) spans 14 to 116 (NLSRHDMLAW…FIQWFKKFFD (103 aa)). 2 disordered regions span residues 157-181 (VPQRTSPTGPKNMQTSGRLSNVAPP) and 260-281 (EGFAPPEDDEIEEHQQEDQDEY). Residues 158–175 (PQRTSPTGPKNMQTSGRL) show a composition bias toward polar residues. Phosphoserine is present on residues serine 162 and serine 176. Residues 194-264 (GGHEADAQIL…LYATEEGFAP (71 aa)) enclose the EB1 C-terminal domain. Residues 217–260 (DGLEKERDFYFSKLRDIELICQEHESENSPVISGIIGILYATEE) are APC-binding. The segment at 217-281 (DGLEKERDFY…EHQQEDQDEY (65 aa)) is DCTN1-binding. The segment covering 272–281 (EHQQEDQDEY) has biased composition (basic and acidic residues).

It belongs to the MAPRE family. In terms of assembly, homodimer. Heterodimer with MAPRE1. Binds monomeric and polymerized GTP-bound tubulin. Interacts with DCTN1 and SRCIN1. Binds to the C-terminal domain of APC. Interacts (via C-terminus) with CLIP1. Interacts with SLAIN2. Interacts with SLAIN1. Interacts with APC2. Interacts with AKAP9. Interacts with PDE4DIP isoform 2/MMG8/SMYLE; this interaction is required for its recruitment to the Golgi apparatus.

It is found in the cytoplasm. Its subcellular location is the cytoskeleton. Functionally, plus-end tracking protein (+TIP) that binds to the plus-end of microtubules and regulates the dynamics of the microtubule cytoskeleton. Promotes microtubule growth. May be involved in spindle function by stabilizing microtubules and anchoring them at centrosomes. Also acts as a regulator of minus-end microtubule organization: interacts with the complex formed by AKAP9 and PDE4DIP, leading to recruit CAMSAP2 to the Golgi apparatus, thereby tethering non-centrosomal minus-end microtubules to the Golgi, an important step for polarized cell movement. Promotes elongation of CAMSAP2-decorated microtubule stretches on the minus-end of microtubules. In Mus musculus (Mouse), this protein is Microtubule-associated protein RP/EB family member 3 (Mapre3).